The sequence spans 88 residues: Putative regulatory protein AM1_5498 (88 aa).

This sequence belongs to the RemA family.

The sequence is that of Putative regulatory protein AM1_5498 from Acaryochloris marina (strain MBIC 11017).